The following is a 668-amino-acid chain: GTP-binding protein 1 (668 aa).

Positions 1–32 (MAAERSRSPVDSPVPASMFAPEPSSPGAARAA) are disordered. S6, S8, S12, S24, S25, S44, S47, and S69 each carry phosphoserine. In terms of domain architecture, tr-type G spans 158 to 389 (FLEVRVAVVG…LNLLSPRTSY (232 aa)). Positions 167–174 (GNVDAGKS) are G1. 167–174 (GNVDAGKS) contacts GTP. Residues 206–210 (GRTSS) form a G2 region. A G3 region spans residues 252 to 255 (DLAG). Residues 252 to 256 (DLAGH) and 308 to 311 (TKID) each bind GTP. Residues 308-311 (TKID) form a G4 region. A G5 region spans residues 366–368 (SNV). Polar residues predominate over residues 573–595 (LLQTTNNSPMNSKPQQIKMQSTK). The disordered stretch occupies residues 573–668 (LLQTTNNSPM…GACVTPASGC (96 aa)). S580 carries the phosphoserine modification. Residues 609 to 619 (GVPAAGGPPTG) are compositionally biased toward low complexity. Positions 624–637 (SLGTAQAASTSGLQ) are enriched in polar residues. A compositionally biased stretch (basic residues) spans 646–657 (GRRRGGQRHKVK).

Belongs to the TRAFAC class translation factor GTPase superfamily. Classic translation factor GTPase family. GTPBP1 subfamily. In terms of assembly, interacts with EXOSC2/RRP4, EXOSC3/RRP40, EXOSC5/RRP46, HNRNPD, HNRNPR and SYNCRIP. Identified in a complex with AANAT mRNA, but does not bind mRNA by itself. Detected in some neurons in the brain cortex. Detected in small arteries, dendritic cells and macrophages in the thymus. Detected in lung bronchi, in bronchial epithelial cells and in bronchial smooth muscle cells. Detected in smooth muscle cells in a broad range of organs (at protein level). Expressed in brain, thymus, lung, and kidney.

It localises to the cytoplasm. Its function is as follows. Promotes degradation of target mRNA species. Plays a role in the regulation of circadian mRNA stability. Binds GTP and has GTPase activity. The chain is GTP-binding protein 1 (Gtpbp1) from Mus musculus (Mouse).